Reading from the N-terminus, the 37-residue chain is Delta-amaurobitoxin-Pl1b (37 aa).

Intrachain disulfides connect Cys-2/Cys-18, Cys-9/Cys-23, Cys-17/Cys-33, and Cys-25/Cys-31. Serine amide is present on Ser-37.

Belongs to the neurotoxin 07 (Beta/delta-agtx) family. 02 (aga-3) subfamily. As to expression, expressed by the venom gland.

The protein resides in the secreted. Insecticidal toxin. Binds to site 4 of insect voltage-gated sodium channel (Nav) and inhibits channel inactivation. In vivo, it lethal to lepidopteran larvae. Has no adverse affects when intracerebroventricularly injected in mice at a dose of 0.2 ug, but causes reversible paralysis of legs when injected intracerebroventricularly in mice at a dose of 2.0 ug. The chain is Delta-amaurobitoxin-Pl1b from Pireneitega luctuosa (Tangled nest spider).